Here is a 389-residue protein sequence, read N- to C-terminus: Na(+)/H(+) antiporter NhaA (389 aa).

Helical transmembrane passes span A14–L34, L59–V79, S95–F115, A124–L144, V154–F174, T177–L197, L213–I233, P257–G277, I292–V312, I328–L348, and L363–V383.

It belongs to the NhaA Na(+)/H(+) (TC 2.A.33) antiporter family.

The protein resides in the cell inner membrane. The catalysed reaction is Na(+)(in) + 2 H(+)(out) = Na(+)(out) + 2 H(+)(in). Functionally, na(+)/H(+) antiporter that extrudes sodium in exchange for external protons. The protein is Na(+)/H(+) antiporter NhaA of Shewanella baltica (strain OS223).